The chain runs to 130 residues: Mitochondrial import protein 1 (130 aa).

Residues 1-41 (MSAEEISNPLAESGVTISSDSEQYSAPESASPQSPSSSSPA) are disordered. Residues 15–24 (VTISSDSEQY) are compositionally biased toward polar residues. Residues 25–41 (SAPESASPQSPSSSSPA) show a composition bias toward low complexity.

It belongs to the MIM1 family.

The protein localises to the mitochondrion outer membrane. In terms of biological role, required for the assembly of the TOM (translocase of outer membrane) receptor complex, which is responsible for the recognition and translocation of cytosolically synthesized mitochondrial preproteins. This is Mitochondrial import protein 1 from Neurospora crassa (strain ATCC 24698 / 74-OR23-1A / CBS 708.71 / DSM 1257 / FGSC 987).